The chain runs to 403 residues: MKSCIIATGNELTEGIILDKNSKYLAERLKSVGYDTLKITNVKDDLSLIKLSIEESLEMCDIIFLTGGLGPTQDDLTVQAVSESCNIDIVFNEELFEKIKKYYYNKTGKYLSILKKQSYVLKNAEILQNPVGSAPGQKVHFNGHTIYLLPGPYNEMKAIFDTHIYDELKSNMKNDHVEYSLYFYGLTEAELMQEVSVILKNFDYSTKIEEYIGPSLRIRMQKNDDFEPILEKILSQFSRYFIGFKSLEITLFDVLMKSSKTLSFAESCTGGMLSDTLVSIPGASNVFKGSLVTYSNESKVRLLDVKKETIEKFGAVSEETVKEMAYGLKKIMESDICVSVSGIAGPSLGSEQKPVGTVWYGFLINEDFFALKNVFTGDRDEIRKRATYFAFWNILDLVRKRYL.

Belongs to the CinA family.

This is CinA-like protein from Petrotoga mobilis (strain DSM 10674 / SJ95).